We begin with the raw amino-acid sequence, 568 residues long: Urease subunit alpha (568 aa).

Residues 130–568 enclose the Urease domain; it reads GGIDTHIHFI…LPMAQRYFLF (439 aa). The Ni(2+) site is built by histidine 135, histidine 137, and lysine 218. At lysine 218 the chain carries N6-carboxylysine. Position 220 (histidine 220) interacts with substrate. The Ni(2+) site is built by histidine 247 and histidine 273. Histidine 321 functions as the Proton donor in the catalytic mechanism. Residue aspartate 361 participates in Ni(2+) binding.

This sequence belongs to the metallo-dependent hydrolases superfamily. Urease alpha subunit family. Heterotrimer of UreA (gamma), UreB (beta) and UreC (alpha) subunits. Three heterotrimers associate to form the active enzyme. Requires Ni cation as cofactor. In terms of processing, carboxylation allows a single lysine to coordinate two nickel ions.

Its subcellular location is the cytoplasm. The catalysed reaction is urea + 2 H2O + H(+) = hydrogencarbonate + 2 NH4(+). It participates in nitrogen metabolism; urea degradation; CO(2) and NH(3) from urea (urease route): step 1/1. In Burkholderia mallei (strain NCTC 10247), this protein is Urease subunit alpha.